A 296-amino-acid chain; its full sequence is Centromere protein O (296 aa).

Residues 17-105 are a coiled coil; that stretch reads VLAHLERLET…NMKAILQAYR (89 aa).

Belongs to the CENP-O/MCM21 family. As to quaternary structure, component of the CENPA-CAD complex, composed of CENPI, CENPK, CENPL, CENPO, CENPP, CENPQ, CENPR and CENPS. The CENPA-CAD complex interacts with the CENPA-NAC complex, at least composed of CENPA, CENPC, CENPH, CENPM, CENPN, CENPT and CENPU.

It is found in the nucleus. Its subcellular location is the chromosome. The protein localises to the centromere. The protein resides in the kinetochore. In terms of biological role, component of the CENPA-CAD (nucleosome distal) complex, a complex recruited to centromeres which is involved in assembly of kinetochore proteins, mitotic progression and chromosome segregation. May be involved in incorporation of newly synthesized CENPA into centromeres via its interaction with the CENPA-NAC complex. Modulates the kinetochore-bound levels of NDC80 complex. This is Centromere protein O (CENPO) from Bos taurus (Bovine).